Reading from the N-terminus, the 763-residue chain is MMRYSLLCTCLFLAWWAIGGRGLATPYPSTPEFSGSPGSRATSGSPGTPKSLSATPRKILPTAKSVNYTEMIEKNPSLTIDLGNQTKYQLNWTDVVKVIPGELIEKMWEESNVTESLWFTLNKFTDVYKKDTIFKNFTGHFTTKYVCNVSQGEPNYNVSQREVKEIKEYDGKFGIPAPVVLSDLLASVNYVLRPQHATHNVFYTTRDYDAYFSVFFGDKDTQMLGYITRDFSFVTAVSWTNGTFRFLTTMMGYTDRLPVLKGHLIYKTDFIVGQNERFSMVILTTFLDHAYFESLVHPDFQGIFKDLTERPPAEVIVELQDKMVELEATQKCPVQSMSKITFEYVLKFAFSHFMAVAGLEDAGQHVKVRCLFDVLHELALLRAMTATCFHPFYFKGFTSNHLSSVATVMVTRTPIKQLKTFSHGDRDAVLATLQVADNVKEATDRILWAAAEIMDDIYTAYTDSFYLKLEDRGHLLDVFVLLRDKEKQHQVLKNRNLMIIYLTAGSMCNSVEISTVTSMLSDKNHYSLRRTFSPCLMSLRFDFTKDKLISETRLLPNMTYLRAEDGATGFFNILRDRHVATFNLLPVSSCLKAYAKNILMVIPMFNLTYVVSTAPISIGINYDVRDTFIEKKMFVSAVMSNCSTFPEGSGTRQIPIVYNITRSRSECPLCGAAFLAYDERDGLESMMYVTNRRVERNIFSDASPFFDNQNLHTHYLMLFKNGTVIEIRGRYRERTAQFIIITLFILTLMFGAFLAFKIFVYCC.

Residues 1–22 (MMRYSLLCTCLFLAWWAIGGRG) form the signal peptide. At 23–739 (LATPYPSTPE…RYRERTAQFI (717 aa)) the chain is on the virion surface side. Positions 29–56 (STPEFSGSPGSRATSGSPGTPKSLSATP) are disordered. A compositionally biased stretch (polar residues) spans 31–54 (PEFSGSPGSRATSGSPGTPKSLSA). N-linked (GlcNAc...) asparagine; by host glycans are attached at residues asparagine 67, asparagine 84, asparagine 91, asparagine 112, asparagine 136, asparagine 148, asparagine 157, asparagine 241, asparagine 557, asparagine 606, asparagine 641, asparagine 659, and asparagine 721. Residues 219–283 (KDTQMLGYIT…QNERFSMVIL (65 aa)) are interaction with gL. Residues 740-760 (IITLFILTLMFGAFLAFKIFV) form a helical membrane-spanning segment. The Intravirion portion of the chain corresponds to 761-763 (YCC).

The protein belongs to the herpesviridae glycoprotein H family. In terms of assembly, interacts with glycoprotein L (gL); this interaction is necessary for the correct processing and cell surface expression of gH. The heterodimer gH/gL seems to interact with gB trimers during fusion. Post-translationally, N-glycosylated, O-glycosylated, and sialylated.

Its subcellular location is the virion membrane. The protein resides in the host cell membrane. The protein localises to the host endosome membrane. Functionally, the heterodimer glycoprotein H-glycoprotein L is required for the fusion of viral and plasma membranes leading to virus entry into the host cell. Following initial binding to host receptor, membrane fusion is mediated by the fusion machinery composed of gB and the heterodimer gH/gL. May also be involved in the fusion between the virion envelope and the outer nuclear membrane during virion morphogenesis. This chain is Envelope glycoprotein H, found in Equus caballus (Horse).